We begin with the raw amino-acid sequence, 225 residues long: UPF0700 transmembrane protein RA0705 (225 aa).

The next 6 helical transmembrane spans lie at 17-37 (VGLA…AIGL), 66-86 (GLLL…GVMI), 95-115 (ALLF…QPEL), 117-137 (FVSL…IEGL), 168-188 (IIQI…AVLV), and 194-214 (LALW…FQIP).

Belongs to the UPF0700 family.

The protein resides in the cell membrane. The chain is UPF0700 transmembrane protein RA0705 from Rhizobium meliloti (strain 1021) (Ensifer meliloti).